We begin with the raw amino-acid sequence, 1152 residues long: Syntaxin-binding protein 5 (1152 aa).

Positions 14–35 are disordered; it reads TAGSSSASQQQQQQQHPPGNRE. Over residues 17-28 the composition is skewed to low complexity; it reads SSSASQQQQQQQ. WD repeat units lie at residues 62–95, 102–141, 146–182, 201–235, 241–273, 295–337, 345–379, 401–478, 506–620, and 634–696; these read SALA…CYCQ, VIQL…SLKF, VTFC…GYVI, HISD…DYRY, IHSV…PAKP, PILK…KSTA, IVDF…LIDL, TCCE…YKLK, QIIS…ELVI, and TSLA…SGAG. 2 disordered regions span residues 555 to 596 and 675 to 731; these read VDTP…GLRD and SNDP…QKVN. Serine 693 bears the Phosphoserine mark. The segment covering 713–722 has biased composition (low complexity); the sequence is SPTSGSSSPH. Phosphoserine occurs at positions 724 and 760. Threonine 763 is subject to Phosphothreonine. Position 783 is a phosphoserine (serine 783). Position 785 is a phosphothreonine (threonine 785). Position 786 is a phosphoserine (serine 786). 4 WD repeats span residues 795–852, 861–935, 940–984, and 998–1021; these read ISAL…SGTI, RMAF…QSCA, ITET…LDVY, and CFAN…TYSQ. The segment covering 883-893 has biased composition (basic and acidic residues); it reads NVAEEKDEKEK. Residues 883–907 form a disordered region; sequence NVAEEKDEKEKLKKRRPVSVSPSSS. A phosphoserine mark is found at serine 901 and serine 903. Threonine 1040 carries the post-translational modification Phosphothreonine. A phosphoserine mark is found at serine 1059 and serine 1132. Residues 1087–1147 form the v-SNARE coiled-coil homology domain; sequence GIEGVKGAAS…HEMMLKYKDK (61 aa).

It belongs to the WD repeat L(2)GL family. In terms of assembly, part of a complex that contains STX1, STXBP5, SNAP25 and SYT1. Interacts with STX1A and STX4A via its v-SNARE homology domain. Part of a complex that contains STXBP5, STX4A and SNAP23. In terms of tissue distribution, detected in heart, spleen, lung, skeletal muscle, liver and kidney (at protein level). Detected in brain, particularly in the olfactory bulb and in hippocampus. Detected in the tenia tecta and in the piriform layer of the brain cortex.

Its subcellular location is the cytoplasm. The protein localises to the cell membrane. It localises to the membrane. In terms of biological role, plays a regulatory role in calcium-dependent exocytosis and neurotransmitter release. Inhibits membrane fusion between transport vesicles and the plasma membrane. May modulate the assembly of trans-SNARE complexes between transport vesicles and the plasma membrane. Competes with STXBP1 for STX1 binding. Inhibits translocation of GLUT4 from intracellular vesicles to the plasma membrane. This is Syntaxin-binding protein 5 (Stxbp5) from Mus musculus (Mouse).